A 540-amino-acid polypeptide reads, in one-letter code: FAD-binding monooxygenase lolF1 (540 aa).

Residues 43-46 and 55-58 contribute to the FAD site; these read VWRE and DSLF. Residues 53 to 55, 182 to 188, and 205 to 206 contribute to the NADP(+) site; these read AVD, TGPSGVQ, and QS.

This sequence belongs to the FAD-binding monooxygenase family. It depends on FAD as a cofactor.

Its pathway is alkaloid biosynthesis. In terms of biological role, FAD-binding monooxygenase; part of the gene cluster that mediates the biosynthesis of loline alkaloids, potent insecticidal agents composed of a pyrrolizidine ring system and an uncommon ether bridge linking carbons 2 and 7. Lolines are structurally differentiated by the various modifications of the L-amino group and include norloline, loline, N-methylloline, N-acetylloline, N-acetylnorloline, and N-formylloline. The first committed step is the condensation of O-acetyl-L-homoserine (derived from L-aspartic acid) and L-proline, probably catalyzed by the gamma-type pyridoxal 5'-phosphate(PLP)-dependent enzyme lolC, to give the diamino diacid, NACPP. Ensuing cyclization, decarboxylation, and acetylation steps yield 1-exo-acetamidopyrrolizidine (AcAP). LolO is required for installation of the ether bridge upon the pathway intermediate, 1-exo-acetamidopyrrolizidine (AcAP). In sequential 2-oxoglutarate- and O(2)-consuming steps, lolO removes hydrogens from C2 and C7 of AcAP to form both carbon-oxygen bonds in N-acetylnorloline (NANL), the precursor to all other lolines. The enzymes lolD, lolE, lolF and lolT have also been proposed to be involved in the ether-bridge installation. Further processing of the exocyclic moiety of NANL by fungal N-acetamidase (LolN), methyltransferase (LolM), and cytochrome P450 (LolP) enzymes, with occasional involvement of a plant acetyltransferase, generates the other known lolines. LolN transforms NANL to norlonine which is monomethylated and dimethylated to respectively lonine and N-methyllonine (NML) by lolM. LolP catalyzes hydroxylation of the methyl group in N-methylloline (NML) and further oxygenation to N-formylloline (NFL). A plant acetyltransferase is responsible for the acetylation of loline to form N-acetylloline (NAL). LolA might interact with aspartate kinase to prevent feedback inhibition of its activity by these end products and thereby promote production of L-homoserine from L-aspartate. The protein is FAD-binding monooxygenase lolF1 of Epichloe uncinata (Endophyte fungus).